The primary structure comprises 304 residues: Ribosomal protein L11 methyltransferase (304 aa).

The S-adenosyl-L-methionine site is built by threonine 155, glycine 176, aspartate 198, and asparagine 239.

This sequence belongs to the methyltransferase superfamily. PrmA family.

Its subcellular location is the cytoplasm. It carries out the reaction L-lysyl-[protein] + 3 S-adenosyl-L-methionine = N(6),N(6),N(6)-trimethyl-L-lysyl-[protein] + 3 S-adenosyl-L-homocysteine + 3 H(+). Methylates ribosomal protein L11. This is Ribosomal protein L11 methyltransferase from Caldicellulosiruptor bescii (strain ATCC BAA-1888 / DSM 6725 / KCTC 15123 / Z-1320) (Anaerocellum thermophilum).